Consider the following 92-residue polypeptide: Large ribosomal subunit protein eL37 (92 aa).

Positions 19, 22, 34, and 37 each coordinate Zn(2+). Residues 19 to 37 (CRRCGRSSYHIQKSKCAQC) form a C4-type zinc finger.

It belongs to the eukaryotic ribosomal protein eL37 family. The cofactor is Zn(2+).

Functionally, binds to the 23S rRNA. The sequence is that of Large ribosomal subunit protein eL37 (RpL37) from Spodoptera frugiperda (Fall armyworm).